The following is a 445-amino-acid chain: Fibrinogen gamma chain (445 aa).

The first 25 residues, M1–A25, serve as a signal peptide directing secretion. A glycan (N-linked (GlcNAc...) asparagine) is linked at N78. The Fibrinogen C-terminal domain maps to R170–N416. C179 and C208 are oxidised to a cystine. Ca(2+)-binding residues include D344, D346, and G350. A disulfide bridge links C352 with C365. The interval T400–D422 is gamma-chain polymerization, binding amino end of another fibrin alpha chain. Q424 is covalently cross-linked (Isoglutamyl lysine isopeptide (Gln-Lys) (interchain with K-432)). A disordered region spans residues Q424–P445. S431 carries the phosphoserine modification. K432 is covalently cross-linked (Isoglutamyl lysine isopeptide (Lys-Gln) (interchain with Q-424)). Basic and acidic residues predominate over residues S435–P445.

As to quaternary structure, heterohexamer; disulfide linked. Contains 2 sets of 3 non-identical chains (alpha, beta and gamma). The 2 heterotrimers are in head to head conformation with the N-termini in a small central domain. In terms of processing, conversion of fibrinogen to fibrin is triggered by thrombin, which cleaves fibrinopeptides A and B from alpha and beta chains, and thus exposes the N-terminal polymerization sites responsible for the formation of the soft clot. The soft clot is converted into the hard clot by factor XIIIA which catalyzes the epsilon-(gamma-glutamyl)lysine cross-linking between gamma chains (stronger) and between alpha chains (weaker) of different monomers.

It is found in the secreted. Together with fibrinogen alpha (FGA) and fibrinogen beta (FGB), polymerizes to form an insoluble fibrin matrix. Has a major function in hemostasis as one of the primary components of blood clots. In addition, functions during the early stages of wound repair to stabilize the lesion and guide cell migration during re-epithelialization. Was originally thought to be essential for platelet aggregation, based on in vitro studies using anticoagulated blood. However, subsequent studies have shown that it is not absolutely required for thrombus formation in vivo. Enhances expression of SELP in activated platelets via an ITGB3-dependent pathway. Maternal fibrinogen is essential for successful pregnancy. Fibrin deposition is also associated with infection, where it protects against IFNG-mediated hemorrhage. May also facilitate the antibacterial immune response via both innate and T-cell mediated pathways. The polypeptide is Fibrinogen gamma chain (Fgg) (Rattus norvegicus (Rat)).